A 301-amino-acid polypeptide reads, in one-letter code: MFGWHWLLEWQTPYEFHGHLIEKVFAEEKTPYQHVTLVEFTRFGKGLIIDGKVQSTLYDEHIYHELLVHPLLLSLPKPPKNVLILGGGEGATLREVLKYKSVEKAVMVDIDEKVIEFAKKYLYEWHQGAFEDKRTSLIITDGLKFINETKDKYDAIILDLTDPIKDSTSYMLYTKEFYEKLRGILNQGGGIVTQATSPSFSLEVYVTIYNTIKEVFKEASASYTYMASFDGLWGFVYGGVRPDLLSEDEVNSRIRERISGQLRFYDDYSHKISFSLPKNIKSEFKKITKVSTEKDPIYVPA.

In terms of domain architecture, PABS spans 4–240 (WHWLLEWQTP…GLWGFVYGGV (237 aa)). Gln-33 is a binding site for S-methyl-5'-thioadenosine. Residues His-64 and Glu-89 each coordinate spermidine. S-methyl-5'-thioadenosine contacts are provided by residues Asp-109 and 141–142 (DG). Asp-159 (proton acceptor) is an active-site residue.

Belongs to the spermidine/spermine synthase family. In terms of assembly, homodimer or homotetramer.

It is found in the cytoplasm. It catalyses the reaction S-adenosyl 3-(methylsulfanyl)propylamine + putrescine = S-methyl-5'-thioadenosine + spermidine + H(+). It functions in the pathway amine and polyamine biosynthesis; spermidine biosynthesis; spermidine from putrescine: step 1/1. Catalyzes the irreversible transfer of a propylamine group from the amino donor S-adenosylmethioninamine (decarboxy-AdoMet) to putrescine (1,4-diaminobutane) to yield spermidine. This chain is Polyamine aminopropyltransferase, found in Saccharolobus islandicus (strain Y.N.15.51 / Yellowstone #2) (Sulfolobus islandicus).